Here is a 196-residue protein sequence, read N- to C-terminus: uncharacterized protein (196 aa).

A Macro domain is found at 1–183 (MREFHYGVHM…RFLFILSDLG (183 aa)).

The protein belongs to the MacroD-type family.

This is an uncharacterized protein from Thermoplasma acidophilum (strain ATCC 25905 / DSM 1728 / JCM 9062 / NBRC 15155 / AMRC-C165).